Reading from the N-terminus, the 421-residue chain is MAATAVEFQRAQSLLSTDRNASIDILHAIVKRDVQDDDEEAVRVKEQSILELGGLLAKTGQAAELGGLLKYVRPFLNSISKAKAARLVRSLLDMFLDMEAATGQEVELCLECIEWAKSEKRTFLRQALEARLVSLYFDTKRYQEALQLGSQLLQELKKMDDKALLVELQLLESKTYHALSNLPKARAALTSARTTANAIYCPPKLQAALDMQSGIIHAAEEKDWKTAYSYFYEAFEGYDSIDSPRAITALKYMLLCKIMLNSPEDVQSLISGKLALRYAGRQTEALKCVAQASKNRSLADFEKALTEYKAELRDDPIISTHLTKLYDNLLEQNLIRVIEPFSRVQIEHISELIKLSKGDVERKLSQMILDQKFHGILDQGEGVLIVFDEPPVDKTYEASLETIQNMSKVVDSLYNKAKKLT.

The PCI domain occupies 227–391 (AYSYFYEAFE…GVLIVFDEPP (165 aa)).

The protein belongs to the proteasome subunit S9 family. As to quaternary structure, component of the lid subcomplex of the 19S proteasome regulatory particle complex (also named PA700 complex). The 26S proteasome consists of a 20S proteasome core and two 19S regulatory subunits.

Its subcellular location is the nucleus. The protein localises to the cytoplasm. It localises to the cytosol. Component of the lid subcomplex of the 26S proteasome, a multiprotein complex involved in the ATP-dependent degradation of ubiquitinated proteins. In the complex, psmd11a is required for proteasome assembly. This chain is 26S proteasome non-ATPase regulatory subunit 11A (psmd11a), found in Danio rerio (Zebrafish).